The sequence spans 196 residues: uncharacterized protein (196 aa).

FAD-binding positions include 15-22 (SQGKFNKT), 68-71 (GWWM), Tyr107, and 123-126 (TWNA).

The protein belongs to the oxidoreductase MdaB family. FAD serves as cofactor.

This is an uncharacterized protein from Schizosaccharomyces pombe (strain 972 / ATCC 24843) (Fission yeast).